A 997-amino-acid chain; its full sequence is Sorting nexin-19 (997 aa).

Residues 95 to 273 (ERQLEQEINR…ILVSIFSKYR (179 aa)) form the PXA domain. 2 disordered regions span residues 313 to 333 (SSPA…SPEI) and 413 to 437 (GALE…APGT). Acidic residues predominate over residues 422–435 (GSECMEGAEAEEAP). The 131-residue stretch at 538 to 668 (LRITGTITAR…EFLALNTDAR (131 aa)) folds into the PX domain. A 1,2-diacyl-sn-glycero-3-phospho-(1D-myo-inositol-3-phosphate) is bound by residues R587 and R634. Positions 697 to 728 (FPRSEPQSPTEELSEAENESKPQTEGKKASKS) are disordered. Over residues 714 to 724 (NESKPQTEGKK) the composition is skewed to basic and acidic residues.

It belongs to the sorting nexin family. As to quaternary structure, interacts with PTPRN.

The protein localises to the early endosome membrane. It is found in the cytoplasmic vesicle membrane. Functionally, plays a role in intracellular vesicle trafficking and exocytosis. May play a role in maintaining insulin-containing dense core vesicles in pancreatic beta-cells and in preventing their degradation. May play a role in insulin secretion. Interacts with membranes containing phosphatidylinositol 3-phosphate (PtdIns(3P)). In Mus musculus (Mouse), this protein is Sorting nexin-19.